A 157-amino-acid chain; its full sequence is Aspartate carbamoyltransferase regulatory chain (157 aa).

Residues Cys-108, Cys-113, Cys-138, and Cys-141 each contribute to the Zn(2+) site.

This sequence belongs to the PyrI family. In terms of assembly, contains catalytic and regulatory chains. Requires Zn(2+) as cofactor.

In terms of biological role, involved in allosteric regulation of aspartate carbamoyltransferase. In Ignicoccus hospitalis (strain KIN4/I / DSM 18386 / JCM 14125), this protein is Aspartate carbamoyltransferase regulatory chain.